A 137-amino-acid chain; its full sequence is Large ribosomal subunit protein uL16 (137 aa).

The protein belongs to the universal ribosomal protein uL16 family. Part of the 50S ribosomal subunit.

Binds 23S rRNA and is also seen to make contacts with the A and possibly P site tRNAs. The sequence is that of Large ribosomal subunit protein uL16 from Paracoccus denitrificans (strain Pd 1222).